The primary structure comprises 150 residues: uncharacterized protein (150 aa).

Belongs to the IIV-6 391R family.

This is an uncharacterized protein from Invertebrate iridescent virus 3 (IIV-3).